Consider the following 328-residue polypeptide: Fructosamine deglycase FrlB (328 aa).

2 SIS domains span residues 15–153 (FLQD…VLEN) and 181–311 (NAKQ…ELAE).

Homooctamer.

Its function is as follows. Catalyzes the conversion of a range of fructosamine 6-phosphates to glucose 6-phosphate and a free amino acid. This chain is Fructosamine deglycase FrlB (frlB), found in Bacillus subtilis (strain 168).